The sequence spans 527 residues: Bifunctional dihydrofolate reductase-thymidylate synthase (527 aa).

The DHFR domain maps to 28-238 (PFSVVVASDE…KKYQFEKLVP (211 aa)). Val-32 serves as a coordination point for substrate. NADP(+)-binding positions include Ala-34 and 40 to 46 (GIGDGGT). A substrate-binding site is contributed by Asp-54. Residues 84–86 (RKT) and 105–108 (LSRS) contribute to the NADP(+) site. Residues Ile-160, Tyr-166, and Thr-184 each contribute to the substrate site. 161-168 (GGGTIYKQ) is a binding site for NADP(+). The thymidylate synthase stretch occupies residues 243-527 (EEQYLNLVGR…YPVISMEMAV (285 aa)). Position 263 (Arg-263) interacts with dUMP. Cys-409 is an active-site residue. Residues His-410, 428–432 (QRSCD), Asn-440, and 470–472 (HVY) each bind dUMP.

It in the N-terminal section; belongs to the dihydrofolate reductase family. In the C-terminal section; belongs to the thymidylate synthase family. Homodimer.

It catalyses the reaction dUMP + (6R)-5,10-methylene-5,6,7,8-tetrahydrofolate = 7,8-dihydrofolate + dTMP. The catalysed reaction is (6S)-5,6,7,8-tetrahydrofolate + NADP(+) = 7,8-dihydrofolate + NADPH + H(+). The protein operates within pyrimidine metabolism; dTTP biosynthesis. Its pathway is cofactor biosynthesis; tetrahydrofolate biosynthesis; 5,6,7,8-tetrahydrofolate from 7,8-dihydrofolate: step 1/1. Bifunctional enzyme. Involved in de novo dTMP biosynthesis. Key enzyme in folate metabolism. Catalyzes an essential reaction for de novo glycine and purine synthesis, DNA precursor synthesis, and for the conversion of dUMP to dTMP. This Trypanosoma brucei brucei protein is Bifunctional dihydrofolate reductase-thymidylate synthase.